The chain runs to 422 residues: Adenylosuccinate synthetase (422 aa).

GTP is bound by residues 11–17 (GDEGKGK) and 39–41 (GHT). The Proton acceptor role is filled by Asp12. Mg(2+) is bound by residues Asp12 and Gly39. Residues 12–15 (DEGK), 37–40 (NAGH), Thr129, Arg143, Asn219, Thr234, and Arg298 each bind IMP. The active-site Proton donor is His40. Position 294-300 (294-300 (VTTGRKR)) interacts with substrate. Residues Arg300, 326–328 (KLD), and 411–413 (GTG) each bind GTP.

It belongs to the adenylosuccinate synthetase family. In terms of assembly, homodimer. Requires Mg(2+) as cofactor.

It localises to the cytoplasm. It carries out the reaction IMP + L-aspartate + GTP = N(6)-(1,2-dicarboxyethyl)-AMP + GDP + phosphate + 2 H(+). It functions in the pathway purine metabolism; AMP biosynthesis via de novo pathway; AMP from IMP: step 1/2. Its function is as follows. Plays an important role in the de novo pathway and in the salvage pathway of purine nucleotide biosynthesis. Catalyzes the first committed step in the biosynthesis of AMP from IMP. The polypeptide is Adenylosuccinate synthetase (Talaromyces marneffei (strain ATCC 18224 / CBS 334.59 / QM 7333) (Penicillium marneffei)).